The following is a 419-amino-acid chain: L-cysteine:1D-myo-inositol 2-amino-2-deoxy-alpha-D-glucopyranoside ligase (419 aa).

Positions 1-20 (MRSWSVPEVPALPGRGPRVH) are disordered. Position 44 (Cys-44) interacts with Zn(2+). Residues 44–47 (CGIT), Thr-59, and 82–84 (NVT) contribute to the L-cysteinyl-5'-AMP site. Residues 46-56 (ITPYDATHLGH) carry the 'HIGH' region motif. Residues 191-196 (ERGGDP) carry the 'ERGGDP' region motif. Trp-232 serves as a coordination point for L-cysteinyl-5'-AMP. Cys-236 contacts Zn(2+). 254 to 256 (GSD) is a binding site for L-cysteinyl-5'-AMP. Residue His-261 coordinates Zn(2+). Val-289 serves as a coordination point for L-cysteinyl-5'-AMP. The short motif at 295 to 299 (KMSKS) is the 'KMSKS' region element.

It belongs to the class-I aminoacyl-tRNA synthetase family. MshC subfamily. In terms of assembly, monomer. The cofactor is Zn(2+).

It carries out the reaction 1D-myo-inositol 2-amino-2-deoxy-alpha-D-glucopyranoside + L-cysteine + ATP = 1D-myo-inositol 2-(L-cysteinylamino)-2-deoxy-alpha-D-glucopyranoside + AMP + diphosphate + H(+). In terms of biological role, catalyzes the ATP-dependent condensation of GlcN-Ins and L-cysteine to form L-Cys-GlcN-Ins. This is L-cysteine:1D-myo-inositol 2-amino-2-deoxy-alpha-D-glucopyranoside ligase from Kineococcus radiotolerans (strain ATCC BAA-149 / DSM 14245 / SRS30216).